The following is a 222-amino-acid chain: Adapter protein MecA (222 aa).

This sequence belongs to the MecA family. As to quaternary structure, homodimer.

Its function is as follows. Enables the recognition and targeting of unfolded and aggregated proteins to the ClpC protease or to other proteins involved in proteolysis. This is Adapter protein MecA from Lysinibacillus sphaericus (strain C3-41).